The primary structure comprises 187 residues: NADH-quinone oxidoreductase subunit B (187 aa).

The [4Fe-4S] cluster site is built by cysteine 66, cysteine 67, cysteine 131, and cysteine 161.

This sequence belongs to the complex I 20 kDa subunit family. NDH-1 is composed of 14 different subunits. Subunits NuoB, C, D, E, F, and G constitute the peripheral sector of the complex. The cofactor is [4Fe-4S] cluster.

It localises to the cell inner membrane. The catalysed reaction is a quinone + NADH + 5 H(+)(in) = a quinol + NAD(+) + 4 H(+)(out). Its function is as follows. NDH-1 shuttles electrons from NADH, via FMN and iron-sulfur (Fe-S) centers, to quinones in the respiratory chain. The immediate electron acceptor for the enzyme in this species is believed to be ubiquinone. Couples the redox reaction to proton translocation (for every two electrons transferred, four hydrogen ions are translocated across the cytoplasmic membrane), and thus conserves the redox energy in a proton gradient. The chain is NADH-quinone oxidoreductase subunit B from Methylocella silvestris (strain DSM 15510 / CIP 108128 / LMG 27833 / NCIMB 13906 / BL2).